The primary structure comprises 231 residues: Thymidylate kinase (231 aa).

An ATP-binding site is contributed by 10–17 (GGEGAGKT).

The protein belongs to the thymidylate kinase family.

It carries out the reaction dTMP + ATP = dTDP + ADP. Functionally, phosphorylation of dTMP to form dTDP in both de novo and salvage pathways of dTTP synthesis. The protein is Thymidylate kinase of Acaryochloris marina (strain MBIC 11017).